A 304-amino-acid chain; its full sequence is MSKEIALPLESGKKKIGSTYLKLTKPKVVALMLITAVVGMSLAPVVDFPWLQAAFGLVGIGLMAGSAAAFNHLIDRRIDARMARTHKRPLPSGDTNPISVAIFSTALGVIGFVLLYALVNPLTAWMTFLSLLGYAVVYTMYLKRATPQNIVIAGIAGAMPPLLGWTAVTGELHAHAWLLVMIIFIWTPPHFWAIAIHRVEDYRKVDIPMLPVTHGIEYTKTSILLYTILLTLVCILPVLVGMVGSVYLFSSLLLNAGFMYHAWKLKLSPEQNSAMETFKFSIYHLLALFVALLADHYLGLFFTP.

Helical transmembrane passes span 28 to 48 (VVALMLITAVVGMSLAPVVDF), 50 to 70 (WLQAAFGLVGIGLMAGSAAAF), 98 to 118 (ISVAIFSTALGVIGFVLLYAL), 122 to 142 (LTAWMTFLSLLGYAVVYTMYL), 150 to 170 (IVIAGIAGAMPPLLGWTAVTG), 176 to 196 (AWLLVMIIFIWTPPHFWAIAI), 223 to 243 (ILLYTILLTLVCILPVLVGMV), 245 to 265 (SVYLFSSLLLNAGFMYHAWKL), and 282 to 302 (IYHLLALFVALLADHYLGLFF).

This sequence belongs to the UbiA prenyltransferase family. Protoheme IX farnesyltransferase subfamily.

The protein resides in the cell inner membrane. The catalysed reaction is heme b + (2E,6E)-farnesyl diphosphate + H2O = Fe(II)-heme o + diphosphate. The protein operates within porphyrin-containing compound metabolism; heme O biosynthesis; heme O from protoheme: step 1/1. In terms of biological role, converts heme B (protoheme IX) to heme O by substitution of the vinyl group on carbon 2 of heme B porphyrin ring with a hydroxyethyl farnesyl side group. The sequence is that of Protoheme IX farnesyltransferase 2 from Vibrio campbellii (strain ATCC BAA-1116).